Consider the following 88-residue polypeptide: Large ribosomal subunit protein bL27 (88 aa).

Positions 1-22 (MAQKKAGGSSRNGRDSAGRRLG) are disordered.

The protein belongs to the bacterial ribosomal protein bL27 family.

In Gluconobacter oxydans (strain 621H) (Gluconobacter suboxydans), this protein is Large ribosomal subunit protein bL27.